The following is a 138-amino-acid chain: UPF0201 protein PH1010 (138 aa).

This sequence belongs to the UPF0201 family.

This chain is UPF0201 protein PH1010, found in Pyrococcus horikoshii (strain ATCC 700860 / DSM 12428 / JCM 9974 / NBRC 100139 / OT-3).